The following is a 308-amino-acid chain: Cytochrome b (308 aa).

4 consecutive transmembrane segments (helical) span residues Phe-1–Met-21, Trp-45–Ile-66, Trp-81–Leu-101, and Phe-146–Thr-166. His-51 and His-65 together coordinate heme b. His-150 and His-164 together coordinate heme b. His-169 provides a ligand contact to a ubiquinone. 3 helical membrane passes run Thr-194–Ser-214, Leu-256–His-276, and Leu-288–Ser-308.

This sequence belongs to the cytochrome b family. In terms of assembly, the cytochrome bc1 complex contains 11 subunits: 3 respiratory subunits (MT-CYB, CYC1 and UQCRFS1), 2 core proteins (UQCRC1 and UQCRC2) and 6 low-molecular weight proteins (UQCRH/QCR6, UQCRB/QCR7, UQCRQ/QCR8, UQCR10/QCR9, UQCR11/QCR10 and a cleavage product of UQCRFS1). This cytochrome bc1 complex then forms a dimer. It depends on heme b as a cofactor.

Its subcellular location is the mitochondrion inner membrane. In terms of biological role, component of the ubiquinol-cytochrome c reductase complex (complex III or cytochrome b-c1 complex) that is part of the mitochondrial respiratory chain. The b-c1 complex mediates electron transfer from ubiquinol to cytochrome c. Contributes to the generation of a proton gradient across the mitochondrial membrane that is then used for ATP synthesis. The sequence is that of Cytochrome b (MT-CYB) from Zaratornis stresemanni (White-cheeked cotinga).